Reading from the N-terminus, the 391-residue chain is NADH-quinone oxidoreductase subunit D (391 aa).

This sequence belongs to the complex I 49 kDa subunit family. In terms of assembly, NDH-1 is composed of 14 different subunits. Subunits NuoB, C, D, E, F, and G constitute the peripheral sector of the complex.

Its subcellular location is the cell inner membrane. The enzyme catalyses a quinone + NADH + 5 H(+)(in) = a quinol + NAD(+) + 4 H(+)(out). Its function is as follows. NDH-1 shuttles electrons from NADH, via FMN and iron-sulfur (Fe-S) centers, to quinones in the respiratory chain. The immediate electron acceptor for the enzyme in this species is believed to be ubiquinone. Couples the redox reaction to proton translocation (for every two electrons transferred, four hydrogen ions are translocated across the cytoplasmic membrane), and thus conserves the redox energy in a proton gradient. The sequence is that of NADH-quinone oxidoreductase subunit D from Rickettsia akari (strain Hartford).